A 190-amino-acid polypeptide reads, in one-letter code: Elongation factor P 2 (190 aa).

This sequence belongs to the elongation factor P family.

It is found in the cytoplasm. It functions in the pathway protein biosynthesis; polypeptide chain elongation. Its function is as follows. Involved in peptide bond synthesis. Stimulates efficient translation and peptide-bond synthesis on native or reconstituted 70S ribosomes in vitro. Probably functions indirectly by altering the affinity of the ribosome for aminoacyl-tRNA, thus increasing their reactivity as acceptors for peptidyl transferase. The sequence is that of Elongation factor P 2 (efp2) from Protochlamydia amoebophila (strain UWE25).